The primary structure comprises 89 residues: Small ribosomal subunit protein uS15 (89 aa).

It belongs to the universal ribosomal protein uS15 family. In terms of assembly, part of the 30S ribosomal subunit. Forms a bridge to the 50S subunit in the 70S ribosome, contacting the 23S rRNA.

Functionally, one of the primary rRNA binding proteins, it binds directly to 16S rRNA where it helps nucleate assembly of the platform of the 30S subunit by binding and bridging several RNA helices of the 16S rRNA. Its function is as follows. Forms an intersubunit bridge (bridge B4) with the 23S rRNA of the 50S subunit in the ribosome. The polypeptide is Small ribosomal subunit protein uS15 (Pelotomaculum thermopropionicum (strain DSM 13744 / JCM 10971 / SI)).